The primary structure comprises 321 residues: Chlorohydroquinone/hydroquinone 1,2-dioxygenase (321 aa).

2 VOC domains span residues 10-138 (GLHH…IIEQ) and 160-282 (GFHS…ASVT). The Fe cation site is built by His162, His229, and Glu278.

Belongs to the extradiol ring-cleavage dioxygenase family. Fe(2+) is required as a cofactor.

It carries out the reaction hydroquinone + O2 = (2E,4Z)-4-hydroxy-6-oxohexa-2,4-dienoate + H(+). The enzyme catalyses chlorohydroquinone + O2 = 5-chlorocarbonyl-4-hydroxy-penta-2,4-dienoate + H(+). Its pathway is xenobiotic degradation; gamma-hexachlorocyclohexane degradation. Cleaves aromatic rings with two hydroxyl groups at para positions with consumption of O(2). Catalyzes the cleavage of chlorohydroquinone (CHQ), as part of the gamma-hexachlorocyclohexane (gamma-HCH or lindane) degradation pathway, producing 5-chlorocarbonyl-4-hydroxy-penta-2,4-dienoate as an intermediate product that can react with water yielding maleylacetate. This degradation pathway allows S.japonicum UT26 to grow on gamma-HCH as the sole source of carbon and energy. Can also use hydroquinone (HQ) as substrate, leading to gamma-hydroxymuconic semialdehyde. Is not able to convert catechol, contrary to meta-cleavage dioxygenases. This chain is Chlorohydroquinone/hydroquinone 1,2-dioxygenase, found in Sphingobium indicum (strain DSM 16413 / CCM 7287 / MTCC 6362 / UT26 / NBRC 101211 / UT26S) (Sphingobium japonicum).